Consider the following 183-residue polypeptide: MQKQVVVMDEAAIKRALTRVSYEIIERNKGTKNLALVGIKTRGIYLAERLHKRILEIEGIDVPVGDIDITLYRDDLSFKDDKTREPAVHGTNIPFDINGKKVVLVDDVLYTGRTVRAAMDALMDVGRPAQIHLAVLADRGHRELPIRADYVGKNIPTSGNERVEVRLTDVDHAEDAVIINKNE.

Residues 102-114 carry the PRPP-binding motif; sequence VVLVDDVLYTGRT.

Belongs to the purine/pyrimidine phosphoribosyltransferase family. PyrR subfamily. As to quaternary structure, homodimer and homohexamer; in equilibrium.

The catalysed reaction is UMP + diphosphate = 5-phospho-alpha-D-ribose 1-diphosphate + uracil. Functionally, regulates transcriptional attenuation of the pyrimidine nucleotide (pyr) operon by binding in a uridine-dependent manner to specific sites on pyr mRNA. This disrupts an antiterminator hairpin in the RNA and favors formation of a downstream transcription terminator, leading to a reduced expression of downstream genes. Also displays a weak uracil phosphoribosyltransferase activity which is not physiologically significant. This chain is Bifunctional protein PyrR, found in Listeria monocytogenes serotype 4a (strain HCC23).